The chain runs to 371 residues: Solute carrier family 35 member F6 (371 aa).

A signal peptide spans 1–25 (MAWTKHQLFLAGLMLVTGSINTLSA). A run of 2 helical transmembrane segments spans residues 48-68 (FLQA…FYLL) and 89-109 (LLFL…YVAL). The EamA domain maps to 104–160 (LMYVALNMTSASSFQMLRGAVIIFTGLFSVAFLGRRLVLSQWLGILATIAGLVVVGL). A glycan (N-linked (GlcNAc...) asparagine) is linked at Asn110. The next 7 membrane-spanning stretches (helical) occupy residues 117 to 137 (FQML…AFLG), 140 to 160 (LVLS…VVGL), 176 to 196 (VITG…QMVL), 216 to 236 (GLFG…IPAG), 261 to 281 (LIAV…FAGI), 295 to 312 (LDSL…ALGW), and 317 to 336 (ALQI…YNGL). The segment at 347–371 (GRPPAEESEQERLLGGSRTPINDAS) is disordered. Thr365 bears the Phosphothreonine mark.

This sequence belongs to the SLC35F solute transporter family. As to quaternary structure, interacts with SLC25A5.

The protein resides in the mitochondrion. The protein localises to the lysosome membrane. Functionally, involved in the maintenance of mitochondrial membrane potential in pancreatic ductal adenocarcinoma (PDAC) cells. Promotes pancreatic ductal adenocarcinoma (PDAC) cell growth. May play a role as a nucleotide-sugar transporter. The protein is Solute carrier family 35 member F6 (SLC35F6) of Pongo abelii (Sumatran orangutan).